The following is a 615-amino-acid chain: Dihydroxy-acid dehydratase (615 aa).

Mg(2+) is bound at residue aspartate 81. A [2Fe-2S] cluster-binding site is contributed by cysteine 122. The Mg(2+) site is built by aspartate 123 and lysine 124. Lysine 124 is modified (N6-carboxylysine). Residue cysteine 193 coordinates [2Fe-2S] cluster. Residue glutamate 489 participates in Mg(2+) binding. The Proton acceptor role is filled by serine 515.

Belongs to the IlvD/Edd family. As to quaternary structure, homodimer. It depends on [2Fe-2S] cluster as a cofactor. Mg(2+) is required as a cofactor.

The enzyme catalyses (2R)-2,3-dihydroxy-3-methylbutanoate = 3-methyl-2-oxobutanoate + H2O. The catalysed reaction is (2R,3R)-2,3-dihydroxy-3-methylpentanoate = (S)-3-methyl-2-oxopentanoate + H2O. It participates in amino-acid biosynthesis; L-isoleucine biosynthesis; L-isoleucine from 2-oxobutanoate: step 3/4. Its pathway is amino-acid biosynthesis; L-valine biosynthesis; L-valine from pyruvate: step 3/4. Functionally, functions in the biosynthesis of branched-chain amino acids. Catalyzes the dehydration of (2R,3R)-2,3-dihydroxy-3-methylpentanoate (2,3-dihydroxy-3-methylvalerate) into 2-oxo-3-methylpentanoate (2-oxo-3-methylvalerate) and of (2R)-2,3-dihydroxy-3-methylbutanoate (2,3-dihydroxyisovalerate) into 2-oxo-3-methylbutanoate (2-oxoisovalerate), the penultimate precursor to L-isoleucine and L-valine, respectively. The protein is Dihydroxy-acid dehydratase of Pseudomonas savastanoi pv. phaseolicola (strain 1448A / Race 6) (Pseudomonas syringae pv. phaseolicola (strain 1448A / Race 6)).